Here is a 145-residue protein sequence, read N- to C-terminus: UPF0310 protein Mvan_0064 (145 aa).

The protein belongs to the UPF0310 family.

This is UPF0310 protein Mvan_0064 from Mycolicibacterium vanbaalenii (strain DSM 7251 / JCM 13017 / BCRC 16820 / KCTC 9966 / NRRL B-24157 / PYR-1) (Mycobacterium vanbaalenii).